The following is a 500-amino-acid chain: NAD(P)H-quinone oxidoreductase chain 4, chloroplastic (500 aa).

A run of 14 helical transmembrane segments spans residues 4–24 (FPWLTILVVLPIFAGSLIFFL), 37–57 (MSICLLEFLLMTYAFCYHFQL), 87–107 (LGSILLTGFMTTLATLAAWPV), 113–130 (LFYFLMLAMYSGQIGLFS), 134–154 (LLLFFIMWELELIPVYLLLSM), 167–187 (FILYTAGGSIFFLIGVLGMGL), 211–231 (ILFYFGFLIAYAVKLPIIPLH), 242–262 (HYSTCMLLAGILLKMGAYGLI), 272–292 (AHYLFSPWLVIIGAMQIIYAA), 313–333 (MGFIIIGIGSITNIGLNGAIL), 334–354 (QILSHGFIGATLFFLAGTACD), 386–406 (LALPGMSGFVAELVVFFGLIT), 417–437 (LITFVMAIGMILTPIYLLSML), and 462–482 (LFLLICIFLPVIGIGIYPDFV).

It belongs to the complex I subunit 4 family.

It localises to the plastid. Its subcellular location is the chloroplast thylakoid membrane. It catalyses the reaction a plastoquinone + NADH + (n+1) H(+)(in) = a plastoquinol + NAD(+) + n H(+)(out). The catalysed reaction is a plastoquinone + NADPH + (n+1) H(+)(in) = a plastoquinol + NADP(+) + n H(+)(out). This Oryza nivara (Indian wild rice) protein is NAD(P)H-quinone oxidoreductase chain 4, chloroplastic.